The primary structure comprises 1349 residues: MIIKEYRIPLPMTVEEYRIAQLYMIQKKSRNETYGEGSGVEILENRPYTDGPGGSGQYTHKVYHVGMHIPSWFRSILPKAALRVVEESWNAYPYTRTRFTCPFVEKFSIDIETFYKTDAGENPDVFNLSPVEKNQLTIDFIDIVKDPVPHNEYKTEEDPKLFQSTKTQRGPLSENWIEEYKKQVFPIMCAYKLCKVEFRYWGMQSKIERFIHDTGLRRVMVRAHRQAWCWQDEWYGLSMENIRELEKEAQLMLSRKMAQFNEDGEEATELVKHEAVSDQTSGEPPEPSSSNGEPLVGRGLKKQWSTSSKSSRSSKRGASPSRHSISEWRMQSIARDSDESSDDEFFDAHEDLSDTEEMFPKDITKWSSNDLMDKIESPEPEDTQDGLYRQGAPEFRVASSVEQLNIIEDEVSQPLAAPPSKIHVLLLVLHGGTILDTGAGDPSSKKGDANTIANVFDTVMRVHYPSALGRLAIRLVPCPPVCSDAFALVSNLSPYSHDEGCLSSSQDHIPLAALPLLATSSPQYQEAVATVIQRANLAYGDFIKSQEGMTFNGQVCLIGDCVGGILAFDALCYSNQPVSESQSSSRRGSVVSMQDNDLLSPGILMNAAHCCGGGGGGGGGGGSSGGGGSSGGSSLESSRHLSRSNVDIPRSNGTEDPKRQLPRKRSDSSTYELDTIQQHQAFLSSLHASVLRTEPCSRHSSSSTMLDGTGALGRFDFEITDLFLFGCPLGLVLALRKTVIPALDVFQLRPACQQVYNLFHPADPSASRLEPLLERRFHALPPFSVPRYQRYPLGDGCSTLLADVLQTHNAAFQEHGAPSSPGTAPASRGFRRASEISIASQVSGMAESYTASSIAQKAPDALSHTPSVRRLSLLALPAPSPTTPGPHPPARKASPGLERAPGLPELDIGEVAAKWWGQKRIDYALYCPDALTAFPTVALPHLFHASYWESTDVVSFLLRQVMRHDNSSILELDGKEVSVFTPSKPREKWQRKRTHVKLRNVTANHRINDALANEDGPQVLTGRFMYGPLDMVTLTGEKVDVHIMTQPPSGEWLYLDTLVTNNSGRVSYTIPESHRLGVGVYPIKMVVRGDHTFADSYITVLPKGTEFVVFSIDGSFAASVSIMGSDPKVRAGAVDVVRHWQDLGYLIIYVTGRPDMQKQRVVAWLAQHNFPHGVVSFCDGLVHDPLRHKANFLKLLISELHLRVHAAYGSTKDVAVYSAISLSPMQIYIVGRPTKKLQQQCQFITDGYAAHLAQLKYSHRARPARNTATRMALRKGSFGLPGQGDFLRSRNHLLRTISAQPSGPSHRHERTQSQADGEQRGQRSMSVAAGCWGRAMTGRLEPGAAAGPK.

Positions 262 to 344 (EDGEEATELV…RDSDESSDDE (83 aa)) are disordered. Residues 302 to 322 (KQWSTSSKSSRSSKRGASPSR) are compositionally biased toward low complexity. Phosphoserine occurs at positions 337, 341, 368, and 589. Residues 618-631 (GGGGGSSGGGGSSG) show a composition bias toward gly residues. A disordered region spans residues 618 to 671 (GGGGGSSGGGGSSGGSSLESSRHLSRSNVDIPRSNGTEDPKRQLPRKRSDSSTY). Residue serine 644 is modified to Phosphoserine. Residues 653-667 (GTEDPKRQLPRKRSD) show a composition bias toward basic and acidic residues. Serine 700, serine 701, and serine 702 each carry phosphoserine. A DDHD domain is found at 715–963 (FDFEITDLFL…VSFLLRQVMR (249 aa)). Arginine 828 is subject to Omega-N-methylarginine. The disordered stretch occupies residues 876–900 (LPAPSPTTPGPHPPARKASPGLERA). Residues 878-888 (APSPTTPGPHP) show a composition bias toward pro residues. The residue at position 1277 (serine 1277) is a Phosphoserine. The segment at 1296–1326 (TISAQPSGPSHRHERTQSQADGEQRGQRSMS) is disordered.

Belongs to the PtdIns transfer protein family. PI transfer class IIA subfamily. In terms of assembly, interacts with PTK2B via its C-terminus. Interacts with CPNE4 (via VWFA domain). As to expression, highly expressed in brain, heart, ovary, testis and thymus. Detected in small intestine, prostate, pancreas, skeletal muscle, liver, colon and placenta.

It is found in the endomembrane system. Catalyzes the transfer of phosphatidylinositol and phosphatidylcholine between membranes (in vitro). Binds calcium ions. The chain is Membrane-associated phosphatidylinositol transfer protein 2 (PITPNM2) from Homo sapiens (Human).